Reading from the N-terminus, the 101-residue chain is Protein S100-A4 (101 aa).

The residue at position 2 (A2) is an N-acetylalanine. EF-hand domains are found at residues 12 to 47 (IVST…SFLG) and 50 to 85 (TDEA…IAMM). Ca(2+) contacts are provided by K28 and E33. K35 carries the post-translational modification N6-acetyllysine. Residues D63, N65, D67, E69, and E74 each contribute to the Ca(2+) site.

The protein belongs to the S-100 family. In terms of assembly, homodimer. Interacts with PPFIBP1 in a calcium-dependent mode. Interacts with PGLYRP1; this complex acts as a chemoattractant that promotes lymphocyte movement. Interacts with MYH9; this interaction increases cell motility. Interacts with Annexin 2/ANXA2. Interacts with TP53; this interaction promotes TP53 degradation. Interacts with CCR5 and CXCR3. Interacts with FCGR3A; this interaction inhibits PKC-dependent phosphorylation of FCGR3A. In terms of tissue distribution, specifically expressed in different metastatic cells.

It localises to the secreted. The protein localises to the nucleus. The protein resides in the cytoplasm. Calcium-binding protein that plays a role in various cellular processes including motility, angiogenesis, cell differentiation, apoptosis, and autophagy. Increases cell motility and invasiveness by interacting with non-muscle myosin heavy chain (NMMHC) IIA/MYH9. Mechanistically, promotes filament depolymerization and increases the amount of soluble myosin-IIA, resulting in the formation of stable protrusions facilitating chemotaxis. Also modulates the pro-apoptotic function of TP53 by binding to its C-terminal transactivation domain within the nucleus and reducing its protein levels. Within the extracellular space, stimulates cytokine production including granulocyte colony-stimulating factor and CCL24 from T-lymphocytes. In addition, stimulates T-lymphocyte chemotaxis by acting as a chemoattractant complex with PGLYRP1 that promotes lymphocyte migration via CCR5 and CXCR3 receptors. The polypeptide is Protein S100-A4 (S100a4) (Mus musculus (Mouse)).